The chain runs to 469 residues: UDP-N-acetylmuramate--L-alanine ligase (469 aa).

113–119 (GSHGKTT) provides a ligand contact to ATP.

It belongs to the MurCDEF family.

It is found in the cytoplasm. The enzyme catalyses UDP-N-acetyl-alpha-D-muramate + L-alanine + ATP = UDP-N-acetyl-alpha-D-muramoyl-L-alanine + ADP + phosphate + H(+). The protein operates within cell wall biogenesis; peptidoglycan biosynthesis. Its function is as follows. Cell wall formation. The protein is UDP-N-acetylmuramate--L-alanine ligase of Sorangium cellulosum (strain So ce56) (Polyangium cellulosum (strain So ce56)).